A 202-amino-acid chain; its full sequence is Large ribosomal subunit protein uL4 (202 aa).

The disordered stretch occupies residues 40 to 71; the sequence is GRQGSKAQKTRSQVSGGGKKPWRQKGSGRARA. Polar residues predominate over residues 44–53; it reads SKAQKTRSQV.

The protein belongs to the universal ribosomal protein uL4 family. In terms of assembly, part of the 50S ribosomal subunit.

Its function is as follows. One of the primary rRNA binding proteins, this protein initially binds near the 5'-end of the 23S rRNA. It is important during the early stages of 50S assembly. It makes multiple contacts with different domains of the 23S rRNA in the assembled 50S subunit and ribosome. Functionally, forms part of the polypeptide exit tunnel. In Hahella chejuensis (strain KCTC 2396), this protein is Large ribosomal subunit protein uL4.